Here is a 127-residue protein sequence, read N- to C-terminus: Glycine cleavage system H protein (127 aa).

Residues 23–105 form the Lipoyl-binding domain; that stretch reads KVSVGITDFA…YGEGWIAVIE (83 aa). Lys-64 carries the N6-lipoyllysine modification.

The protein belongs to the GcvH family. The glycine cleavage system is composed of four proteins: P, T, L and H. Requires (R)-lipoate as cofactor.

The glycine cleavage system catalyzes the degradation of glycine. The H protein shuttles the methylamine group of glycine from the P protein to the T protein. In Coprothermobacter proteolyticus (strain ATCC 35245 / DSM 5265 / OCM 4 / BT), this protein is Glycine cleavage system H protein.